The sequence spans 311 residues: 4-hydroxy-tetrahydrodipicolinate synthase (311 aa).

Thr-51 contacts pyruvate. Tyr-140 acts as the Proton donor/acceptor in catalysis. Lys-168 functions as the Schiff-base intermediate with substrate in the catalytic mechanism. Ile-209 contacts pyruvate.

It belongs to the DapA family. As to quaternary structure, homotetramer; dimer of dimers.

The protein localises to the cytoplasm. It carries out the reaction L-aspartate 4-semialdehyde + pyruvate = (2S,4S)-4-hydroxy-2,3,4,5-tetrahydrodipicolinate + H2O + H(+). The protein operates within amino-acid biosynthesis; L-lysine biosynthesis via DAP pathway; (S)-tetrahydrodipicolinate from L-aspartate: step 3/4. Its function is as follows. Catalyzes the condensation of (S)-aspartate-beta-semialdehyde [(S)-ASA] and pyruvate to 4-hydroxy-tetrahydrodipicolinate (HTPA). In Streptococcus pneumoniae (strain CGSP14), this protein is 4-hydroxy-tetrahydrodipicolinate synthase.